Here is a 273-residue protein sequence, read N- to C-terminus: SET domain-containing protein 9 (273 aa).

The SET domain occupies 96-269 (FSVAQATSSL…QGEELFSNYY (174 aa)). Residue Y268 participates in S-adenosyl-L-methionine binding.

This sequence belongs to the class V-like SAM-binding methyltransferase superfamily.

This is SET domain-containing protein 9 (SETD9) from Pongo abelii (Sumatran orangutan).